The sequence spans 1416 residues: MKDLVKFLKAQSKTSEDFDVIKIGLASPDMIRSWSFGEVKKPETINYRTFKPERDGLFCARIFGPVKDYECLCGKYKRLKHRGVICEKCGVEVTQTKVRRERMGHIELASPVAHIWFLKSLPSRIGLLLDMPLRDIERVLYFEMYIVTEPGMTDLERGQLLTEEQYLDAEDRWQDEFEAKMGAEAIQDLLKGMDLEAECEKLREELQETNSETKRKKITKRLKLLEAFVQSGNKPEWMVMTVLPVLPPDLRPLVPLDGGRFATSDLNDLYRRVINRNNRLKRLLDLIAPDIIVRNEKRMLQESVDALLDNGRRGRAITGSNRRPLKSLADMIKGKQGRFRQNLLGKRVDYSGRSVITVGPYLHLHQCGLPKKMALELFRPFIYAKLESRGYATTIKAAKKMVEREDAIVWDILAEVIREHPILLNRAPTLHRLGIQAFEPILIEGKAIQLHPLVCAAFNADFDGDQMAVHVPLTLEAQLEARALMMSTNNVLSPANGDPIIVPSQDVVLGLYYMTREKVNGKGEGMLLQDPREAEKAYRTGEAELHSRVKVRITEYVKNEAGEFDAKTTLTDTTIGRAILWMIAPKGMPYSLFNQTLGKKAISKLINEAYRRLGLKEAVMFADQIMYTGFAYAARSGSSVGIDDMEIPAKKYEIISAAEEEVAEIQEQFQSGLVTAGERYNKVIDIWAAANERVAKAMMENLSQEEVINREGNPEKQASFNSIFMMADSGARGSAAQIRQLAGMRGLMARPDGSIIETPITANFREGLNVLQYFISTHGARKGLADTALKTANSGYLTRRLVDVAQDLVIVEDDCGTHEGLVMTPLIEGGDEKVPLRELVLGRVAAEDILKPGTEEVLIPRNTLLDEKLCDVLDANSVDSVKVRSVVTCDTDFGVCAKCYGRDLARGHLINQGEAVGVIAAQSIGEPGTQLTMRTFHIGGAASAAAKESSVQVKNTGTVHLMNAKFVTNDESKLVLTSRNTELTITDAFGRTKEHYKVPYGAVLSKGDGQEVTAGETIANWDPHTMPVVSEVSGFVKFVDIIDGLTVTRQTDELTGLSSIVVQDVGERATAGKDLRPTIKLVDANGNDIFLPETDVLAQYFLPGKAIVSLDDGAAVKVGEPLARIPQESVGTKDITGGLPRVADLFEARKPKEPAILAEISGIVSFGKETKGKRRLLITPAEGETYEEMIPKWRQLNVFEGEMVQRGDVISDGAETPHDILRLRGVRAVTEYIVNEVQDVYRLQGVKINDKHIEVIVRQMLRKAVITKAYDSEFLEGEQVEVARVKIVNRQREAEGKPPVEFERELLGITKASLATESFISAASFQETTRVLTEAAVAGKRDELRGLKENVIVGRLIPAGTGFAYHQNRHKHRLVDDVVAKLSEEDEAAIADEFVMTADDASANLAEMLNMADDAE.

Residues cysteine 71, cysteine 73, cysteine 86, and cysteine 89 each coordinate Zn(2+). Mg(2+) contacts are provided by aspartate 461, aspartate 463, and aspartate 465. Zn(2+)-binding residues include cysteine 815, cysteine 889, cysteine 896, and cysteine 899.

Belongs to the RNA polymerase beta' chain family. In terms of assembly, the RNAP catalytic core consists of 2 alpha, 1 beta, 1 beta' and 1 omega subunit. When a sigma factor is associated with the core the holoenzyme is formed, which can initiate transcription. Mg(2+) is required as a cofactor. It depends on Zn(2+) as a cofactor.

The catalysed reaction is RNA(n) + a ribonucleoside 5'-triphosphate = RNA(n+1) + diphosphate. Its function is as follows. DNA-dependent RNA polymerase catalyzes the transcription of DNA into RNA using the four ribonucleoside triphosphates as substrates. The sequence is that of DNA-directed RNA polymerase subunit beta' from Haemophilus influenzae (strain PittGG).